Consider the following 339-residue polypeptide: MamK-like protein (339 aa).

Residues 18 to 19 (YS), Asp74, 162 to 164 (AWT), and 216 to 220 (KEQFA) each bind ATP.

Belongs to the FtsA/MreB family. MamK subfamily. Forms cytoplasmic filament polymers. Forms filaments with MamK.

It localises to the cytoplasm. The protein resides in the cytoskeleton. It carries out the reaction ATP + H2O = ADP + phosphate + H(+). Protein with ATPase activity which forms pole-to-pole filaments in vivo, probably with MamK. Efficient filament formation requires MamK. Probably promotes turnover of MamK filaments, by providing a monomer pool. In vivo, in the absence of its paralog MamK, forms thin filaments from pole to pole. In vitro forms straight filaments and bundles in the absence of ATP. Filament formation is triggered by KCl and MgCl(2); polymerizes more slowly and makes thinner filaments than MamK. Expression in E.coli yields a filament in the cell's longitudinal axis; the protein nucleates at one pole or the cell septum. This chain is MamK-like protein, found in Paramagnetospirillum magneticum (strain ATCC 700264 / AMB-1) (Magnetospirillum magneticum).